A 329-amino-acid chain; its full sequence is Flotillin-like protein FloA (329 aa).

2 helical membrane-spanning segments follow: residues 4 to 24 (FIPFIILIGVAFVILSIILSF) and 27 to 47 (VGLWITAQFSGVKVGIFTLVG).

Belongs to the flotillin-like FloA family. In terms of assembly, homooligomerizes.

It localises to the cell membrane. It is found in the membrane raft. In terms of biological role, found in functional membrane microdomains (FMM) that may be equivalent to eukaryotic membrane rafts. FMMs are highly dynamic and increase in number as cells age. Flotillins are thought to be important factors in membrane fluidity. The sequence is that of Flotillin-like protein FloA from Alkaliphilus metalliredigens (strain QYMF).